The chain runs to 71 residues: Defensin-like protein 292 (71 aa).

3 disulfide bridges follow: C44–C64, C50–C69, and C56–C71.

This sequence belongs to the DEFL family.

This is Defensin-like protein 292 from Arabidopsis thaliana (Mouse-ear cress).